We begin with the raw amino-acid sequence, 415 residues long: Arginine biosynthesis bifunctional protein ArgJ (415 aa).

The substrate site is built by Thr-156, Lys-182, Thr-193, Glu-279, Asn-410, and Thr-415. The active-site Nucleophile is Thr-193.

The protein belongs to the ArgJ family. In terms of assembly, heterotetramer of two alpha and two beta chains.

The protein localises to the cytoplasm. The enzyme catalyses N(2)-acetyl-L-ornithine + L-glutamate = N-acetyl-L-glutamate + L-ornithine. It catalyses the reaction L-glutamate + acetyl-CoA = N-acetyl-L-glutamate + CoA + H(+). The protein operates within amino-acid biosynthesis; L-arginine biosynthesis; L-ornithine and N-acetyl-L-glutamate from L-glutamate and N(2)-acetyl-L-ornithine (cyclic): step 1/1. Its pathway is amino-acid biosynthesis; L-arginine biosynthesis; N(2)-acetyl-L-ornithine from L-glutamate: step 1/4. Functionally, catalyzes two activities which are involved in the cyclic version of arginine biosynthesis: the synthesis of N-acetylglutamate from glutamate and acetyl-CoA as the acetyl donor, and of ornithine by transacetylation between N(2)-acetylornithine and glutamate. This chain is Arginine biosynthesis bifunctional protein ArgJ, found in Synechococcus sp. (strain ATCC 27144 / PCC 6301 / SAUG 1402/1) (Anacystis nidulans).